The sequence spans 228 residues: UPF0173 metal-dependent hydrolase BcerKBAB4_4442 (228 aa).

This sequence belongs to the UPF0173 family.

The chain is UPF0173 metal-dependent hydrolase BcerKBAB4_4442 from Bacillus mycoides (strain KBAB4) (Bacillus weihenstephanensis).